The sequence spans 699 residues: Catalase-peroxidase (699 aa).

Positions 72-200 (WHSAGTYRIA…LAAVMMGLIY (129 aa)) form a cross-link, tryptophyl-tyrosyl-methioninium (Trp-Tyr) (with M-226). Histidine 73 acts as the Proton acceptor in catalysis. The tryptophyl-tyrosyl-methioninium (Tyr-Met) (with W-72) cross-link spans 200–226 (YVNPEGVDGNPDPLKTAKDMRVTFARM). Histidine 241 lines the heme b pocket.

This sequence belongs to the peroxidase family. Peroxidase/catalase subfamily. In terms of assembly, homodimer or homotetramer. The cofactor is heme b. In terms of processing, formation of the three residue Trp-Tyr-Met cross-link is important for the catalase, but not the peroxidase activity of the enzyme.

The catalysed reaction is H2O2 + AH2 = A + 2 H2O. It catalyses the reaction 2 H2O2 = O2 + 2 H2O. Its function is as follows. Bifunctional enzyme with both catalase and broad-spectrum peroxidase activity. This is Catalase-peroxidase from Aeromonas salmonicida (strain A449).